The following is a 371-amino-acid chain: MSQDYYKILGVSKTASQADLKKAYLKLAKQYHPDTTDDKDAEKKFKEINRAYDVLKDEQKRAAYDRFGHDTFQNQQSRGGGGSHAGFHHDINDIFGDFFSDFMGGGRRKPTSSKARGSDLKYDLTINLEEAFHGIEKNISFSSEVKCDTCHGSGSEKGETVTTCDACGGVGATRIQQGFFTIEQACHKCKGNGQIIKNPCKKCHGMGRCHKQRNLSVNIPAGVENGTRIRHTGEGEAGIRGGNSGDLYVDIAITPHDIYKVDGANLHCKLPISFVNAALGGEIEVPVIEGRKVNLTIPAGTQNGDQLRLRSKGMPKMRSTIRGDMITHIHIEVPKNLSKRQCELLEEFKKESISEKENDGSFFNKMKSLWS.

In terms of domain architecture, J spans 4-68 (DYYKILGVSK…QKRAAYDRFG (65 aa)). The CR-type zinc-finger motif lies at 134–212 (GIEKNISFSS…CHGMGRCHKQ (79 aa)). The Zn(2+) site is built by Cys147, Cys150, Cys164, Cys167, Cys186, Cys189, Cys200, and Cys203. CXXCXGXG motif repeat units follow at residues 147 to 154 (CDTCHGSG), 164 to 171 (CDACGGVG), 186 to 193 (CHKCKGNG), and 200 to 207 (CKKCHGMG).

The protein belongs to the DnaJ family. As to quaternary structure, homodimer. It depends on Zn(2+) as a cofactor.

It localises to the cytoplasm. Participates actively in the response to hyperosmotic and heat shock by preventing the aggregation of stress-denatured proteins and by disaggregating proteins, also in an autonomous, DnaK-independent fashion. Unfolded proteins bind initially to DnaJ; upon interaction with the DnaJ-bound protein, DnaK hydrolyzes its bound ATP, resulting in the formation of a stable complex. GrpE releases ADP from DnaK; ATP binding to DnaK triggers the release of the substrate protein, thus completing the reaction cycle. Several rounds of ATP-dependent interactions between DnaJ, DnaK and GrpE are required for fully efficient folding. Also involved, together with DnaK and GrpE, in the DNA replication of plasmids through activation of initiation proteins. In Rickettsia akari (strain Hartford), this protein is Chaperone protein DnaJ.